The primary structure comprises 83 residues: MMGKHIQLSFAILIMFTIFVLGAVGDVDQGYKQQCYKTIDVNLCVTGECKKMCVRRFKQAAGMCIKSVPSAPAPNRCRCIYHC.

The signal sequence occupies residues 1 to 25 (MMGKHIQLSFAILIMFTIFVLGAVG). 4 cysteine pairs are disulfide-bonded: Cys35–Cys83, Cys44–Cys64, Cys49–Cys77, and Cys53–Cys79.

It belongs to the DEFL family.

Its subcellular location is the secreted. The sequence is that of Putative defensin-like protein 150 (LCR32) from Arabidopsis thaliana (Mouse-ear cress).